Consider the following 147-residue polypeptide: Nucleoside diphosphate kinase (147 aa).

Positions 9, 57, 85, 91, 102, and 112 each coordinate ATP. His-115 acts as the Pros-phosphohistidine intermediate in catalysis.

Belongs to the NDK family. As to quaternary structure, homotetramer. Mg(2+) is required as a cofactor.

The protein resides in the cytoplasm. It catalyses the reaction a 2'-deoxyribonucleoside 5'-diphosphate + ATP = a 2'-deoxyribonucleoside 5'-triphosphate + ADP. It carries out the reaction a ribonucleoside 5'-diphosphate + ATP = a ribonucleoside 5'-triphosphate + ADP. Major role in the synthesis of nucleoside triphosphates other than ATP. The ATP gamma phosphate is transferred to the NDP beta phosphate via a ping-pong mechanism, using a phosphorylated active-site intermediate. This chain is Nucleoside diphosphate kinase, found in Fervidobacterium nodosum (strain ATCC 35602 / DSM 5306 / Rt17-B1).